The sequence spans 254 residues: Anamorsin homolog (254 aa).

The interval 4–133 is N-terminal SAM-like domain; that stretch reads VQENNHVLYL…EVGSKSKLSF (130 aa). Residues 134 to 165 form a linker region; sequence AKKSNVAAVWKLDDNEEEERIDDEELLDEDDK. [2Fe-2S] cluster-binding residues include cysteine 176, cysteine 185, cysteine 188, and cysteine 190. Residues 176–190 form a fe-S binding site A region; sequence CGTTGKRKACKDCSC. The [4Fe-4S] cluster site is built by cysteine 215, cysteine 218, cysteine 226, and cysteine 229. 2 consecutive short sequence motifs (cx2C motif) follow at residues 215–218 and 226–229; these read CGSC and CATC. Residues 215–229 are fe-S binding site B; sequence CGSCYLGDAFRCATC.

The protein belongs to the anamorsin family. As to quaternary structure, monomer. The cofactor is [2Fe-2S] cluster. It depends on [4Fe-4S] cluster as a cofactor.

The protein resides in the cytoplasm. Its subcellular location is the mitochondrion intermembrane space. Component of the cytosolic iron-sulfur (Fe-S) protein assembly (CIA) machinery. Required for the maturation of extramitochondrial Fe-S proteins. Part of an electron transfer chain functioning in an early step of cytosolic Fe-S biogenesis, facilitating the de novo assembly of a [4Fe-4S] cluster on the cytosolic Fe-S scaffold complex. Electrons are transferred from NADPH via a FAD- and FMN-containing diflavin oxidoreductase. Together with the diflavin oxidoreductase, also required for the assembly of the diferric tyrosyl radical cofactor of ribonucleotide reductase (RNR), probably by providing electrons for reduction during radical cofactor maturation in the catalytic small subunit. The protein is Anamorsin homolog of Anopheles gambiae (African malaria mosquito).